The chain runs to 110 residues: Glutaredoxin-2 (110 aa).

The Glutaredoxin domain maps to 6 to 106; it reads KAFVEKAISN…KMIAELKENK (101 aa). Cysteines 26 and 29 form a disulfide.

This sequence belongs to the glutaredoxin family.

In terms of biological role, the disulfide bond functions as an electron carrier in the glutathione-dependent synthesis of deoxyribonucleotides by the enzyme ribonucleotide reductase. In addition, it is also involved in reducing some disulfides in a coupled system with glutathione reductase. Thioltransferase catalyzes cellular thiol-disulfide transhydrogenation reactions. It transfers reducing equivalents to cytosolic protein and nonprotein disulfides. In Schizosaccharomyces pombe (strain 972 / ATCC 24843) (Fission yeast), this protein is Glutaredoxin-2 (grx2).